The following is a 501-amino-acid chain: Probable cytosol aminopeptidase (501 aa).

Positions 267 and 272 each coordinate Mn(2+). Lys279 is a catalytic residue. Mn(2+) contacts are provided by Asp290, Asp349, and Glu351. Residue Arg353 is part of the active site.

The protein belongs to the peptidase M17 family. It depends on Mn(2+) as a cofactor.

Its subcellular location is the cytoplasm. It carries out the reaction Release of an N-terminal amino acid, Xaa-|-Yaa-, in which Xaa is preferably Leu, but may be other amino acids including Pro although not Arg or Lys, and Yaa may be Pro. Amino acid amides and methyl esters are also readily hydrolyzed, but rates on arylamides are exceedingly low.. The catalysed reaction is Release of an N-terminal amino acid, preferentially leucine, but not glutamic or aspartic acids.. In terms of biological role, presumably involved in the processing and regular turnover of intracellular proteins. Catalyzes the removal of unsubstituted N-terminal amino acids from various peptides. This chain is Probable cytosol aminopeptidase, found in Hamiltonella defensa subsp. Acyrthosiphon pisum (strain 5AT).